The primary structure comprises 341 residues: Phenylalanine--tRNA ligase alpha subunit (341 aa).

Glu-254 serves as a coordination point for Mg(2+).

It belongs to the class-II aminoacyl-tRNA synthetase family. Phe-tRNA synthetase alpha subunit type 1 subfamily. In terms of assembly, tetramer of two alpha and two beta subunits. The cofactor is Mg(2+).

It localises to the cytoplasm. The enzyme catalyses tRNA(Phe) + L-phenylalanine + ATP = L-phenylalanyl-tRNA(Phe) + AMP + diphosphate + H(+). This is Phenylalanine--tRNA ligase alpha subunit from Chlorobium limicola (strain DSM 245 / NBRC 103803 / 6330).